Here is a 331-residue protein sequence, read N- to C-terminus: Homoserine O-succinyltransferase (331 aa).

The active-site Acyl-thioester intermediate is the Cys141. 2 residues coordinate substrate: Lys162 and Ser190. His233 serves as the catalytic Proton acceptor. Residue Glu235 is part of the active site. Arg247 is a substrate binding site.

The protein belongs to the MetA family.

It is found in the cytoplasm. The enzyme catalyses L-homoserine + succinyl-CoA = O-succinyl-L-homoserine + CoA. It participates in amino-acid biosynthesis; L-methionine biosynthesis via de novo pathway; O-succinyl-L-homoserine from L-homoserine: step 1/1. Functionally, transfers a succinyl group from succinyl-CoA to L-homoserine, forming succinyl-L-homoserine. The polypeptide is Homoserine O-succinyltransferase (Methylorubrum extorquens (strain DSM 6343 / CIP 106787 / DM4) (Methylobacterium extorquens)).